The primary structure comprises 176 residues: Oleosin Ara h 14.0102 (176 aa).

The residue at position 2 (A2) is an N-acetylalanine; alternate. A run of 2 helical transmembrane segments spans residues 61-81 and 87-107; these read GTLLLLSGLSLLGTIIGLAIA and FFSPVIVPAVVTIGLAVIGIL. The interval 156 to 176 is disordered; sequence KTKDAGQEIQTKAQDVKRSSS.

This sequence belongs to the oleosin family. In terms of assembly, homodimer. Forms oligomers. In terms of tissue distribution, expressed in seeds (at protein level). Not expressed in leaves.

Its subcellular location is the lipid droplet. The protein localises to the membrane. May have a structural role to stabilize the lipid body during desiccation of the seed by preventing coalescence of the oil. Probably interacts with both lipid and phospholipid moieties of lipid bodies. May also provide recognition signals for specific lipase anchorage in lipolysis during seedling growth. This is Oleosin Ara h 14.0102 from Arachis hypogaea (Peanut).